We begin with the raw amino-acid sequence, 390 residues long: Zinc finger protein 121 (390 aa).

The C2H2-type 1; degenerate zinc-finger motif lies at 88 to 110 (FEYSDCEEAFVDQSHLQANRITH). The C2H2-type 2; degenerate zinc-finger motif lies at 116 to 138 (YEQKQCGRAFTYSTSHAVSVKMH). 9 C2H2-type zinc fingers span residues 144 to 166 (YECKECGKFFRYSSYLNSHMRTH), 172 to 194 (YECKECGKCFTVSSHLVEHVRIH), 200 to 222 (YQCKECGRAFAGRSGLTKHVRIH), 228 to 250 (YECNECGKAYNRFYLLTEHFKTH), 256 to 278 (FECKVCGKSFRSSSCLKNHFRIH), 284 to 306 (YKCKECGKAFTVSSSLHNHVKIH), 312 to 334 (YECKDCGKAFATSSQLIEHIRTH), 340 to 362 (YICKECGKTFRASSHLQKHVRIH), and 368 to 390 (YICNECGKAYNRFYLLTKHLKTH).

The protein belongs to the krueppel C2H2-type zinc-finger protein family.

It localises to the nucleus. Functionally, may be involved in transcriptional regulation. This is Zinc finger protein 121 (ZNF121) from Homo sapiens (Human).